We begin with the raw amino-acid sequence, 242 residues long: Probable septum site-determining protein MinC (242 aa).

Belongs to the MinC family. In terms of assembly, interacts with MinD and FtsZ.

Cell division inhibitor that blocks the formation of polar Z ring septums. Rapidly oscillates between the poles of the cell to destabilize FtsZ filaments that have formed before they mature into polar Z rings. Prevents FtsZ polymerization. This is Probable septum site-determining protein MinC from Thioalkalivibrio sulfidiphilus (strain HL-EbGR7).